Consider the following 413-residue polypeptide: Tyrosine--tRNA ligase (413 aa).

The short motif at 60 to 69 is the 'HIGH' region element; that stretch reads PTAPDIHIGH. Residues 244-248 carry the 'KMSKS' region motif; the sequence is KMSKS. Lys-247 provides a ligand contact to ATP. One can recognise an S4 RNA-binding domain in the interval 352-412; the sequence is LGIAQLLKQA…GKRRFARVTL (61 aa).

This sequence belongs to the class-I aminoacyl-tRNA synthetase family. TyrS type 2 subfamily. As to quaternary structure, homodimer.

Its subcellular location is the cytoplasm. The enzyme catalyses tRNA(Tyr) + L-tyrosine + ATP = L-tyrosyl-tRNA(Tyr) + AMP + diphosphate + H(+). Functionally, catalyzes the attachment of tyrosine to tRNA(Tyr) in a two-step reaction: tyrosine is first activated by ATP to form Tyr-AMP and then transferred to the acceptor end of tRNA(Tyr). This is Tyrosine--tRNA ligase from Cupriavidus pinatubonensis (strain JMP 134 / LMG 1197) (Cupriavidus necator (strain JMP 134)).